A 74-amino-acid chain; its full sequence is Mu-conotoxin-like T3.1 (74 aa).

Positions 1–19 (MSKLGVLLTICLLLFPLTA) are cleaved as a signal peptide. Residues 20–74 (LPMDGDEPADRPAERMQDNISSEQHPLFEERHGCCKGPEGCSSRECRPQHCCGRR) constitute a propeptide that is removed on maturation. 3 cysteine pairs are disulfide-bonded: Cys-53-Cys-65, Cys-54-Cys-70, and Cys-60-Cys-71. Pro-57 carries the 4-hydroxyproline modification. Residues Glu-58 and Glu-64 each carry the 4-carboxyglutamate modification. 4-hydroxyproline is present on Pro-67. Cys-71 bears the Cysteine amide mark.

This sequence belongs to the conotoxin M superfamily. In terms of tissue distribution, expressed by the venom duct.

It localises to the secreted. Mu-conotoxins block voltage-gated sodium channels (Nav). In vitro, this synthetic peptide displays a low blocking effect in mouse extensor digitorum longus muscles (IC(50)=616 nM). This chain is Mu-conotoxin-like T3.1, found in Conus tulipa (Fish-hunting cone snail).